The sequence spans 69 residues: DNA-directed RNA polymerase subunit omega (69 aa).

This sequence belongs to the RNA polymerase subunit omega family. The RNAP catalytic core consists of 2 alpha, 1 beta, 1 beta' and 1 omega subunit. When a sigma factor is associated with the core the holoenzyme is formed, which can initiate transcription.

The enzyme catalyses RNA(n) + a ribonucleoside 5'-triphosphate = RNA(n+1) + diphosphate. Promotes RNA polymerase assembly. Latches the N- and C-terminal regions of the beta' subunit thereby facilitating its interaction with the beta and alpha subunits. The protein is DNA-directed RNA polymerase subunit omega of Symbiobacterium thermophilum (strain DSM 24528 / JCM 14929 / IAM 14863 / T).